We begin with the raw amino-acid sequence, 277 residues long: Small ribosomal subunit protein uS2 (277 aa).

Positions L254–A277 are disordered.

Belongs to the universal ribosomal protein uS2 family.

The polypeptide is Small ribosomal subunit protein uS2 (rpsB) (Mycobacterium leprae (strain TN)).